Reading from the N-terminus, the 147-residue chain is Large ribosomal subunit protein uL15 (147 aa).

Over residues Met-1–Arg-14 the composition is skewed to basic and acidic residues. Positions Met-1 to Gln-54 are disordered. Gly residues-rich tracts occupy residues Thr-23–Ser-35 and Ser-42–Gly-52.

This sequence belongs to the universal ribosomal protein uL15 family. As to quaternary structure, part of the 50S ribosomal subunit.

Its function is as follows. Binds to the 23S rRNA. This Alkaliphilus oremlandii (strain OhILAs) (Clostridium oremlandii (strain OhILAs)) protein is Large ribosomal subunit protein uL15.